The following is a 376-amino-acid chain: DNA-directed RNA polymerase subunit alpha (376 aa).

The alpha N-terminal domain (alpha-NTD) stretch occupies residues 1-259 (MSDNSQNLLY…KHFSIFEKMD (259 aa)). Residues 276 to 376 (KDDILHKLVL…EKIRSKNVKG (101 aa)) are alpha C-terminal domain (alpha-CTD).

It belongs to the RNA polymerase alpha chain family. In terms of assembly, homodimer. The RNAP catalytic core consists of 2 alpha, 1 beta, 1 beta' and 1 omega subunit. When a sigma factor is associated with the core the holoenzyme is formed, which can initiate transcription.

The enzyme catalyses RNA(n) + a ribonucleoside 5'-triphosphate = RNA(n+1) + diphosphate. Functionally, DNA-dependent RNA polymerase catalyzes the transcription of DNA into RNA using the four ribonucleoside triphosphates as substrates. This chain is DNA-directed RNA polymerase subunit alpha, found in Chlamydia felis (strain Fe/C-56) (Chlamydophila felis).